The following is a 671-amino-acid chain: Transcription factor xilB (671 aa).

The zn(2)-C6 fungal-type DNA-binding region spans 11–46 (CHSCYTRKQKASESDSICDRQYPCNHCTRRRRPEEC). The interval 48 to 90 (YGPPPVKVPSCPPVPADQSETQPRPVESARPTRETPVDDSEAH) is disordered. The segment covering 49–62 (GPPPVKVPSCPPVP) has biased composition (pro residues). Positions 77 to 90 (RPTRETPVDDSEAH) are enriched in basic and acidic residues. A fungal transcription factor domain region spans residues 148 to 593 (PERQIIDFLV…ATLLFARSVQ (446 aa)). Positions 629–650 (WPSLEAGDPYSMPDNFPSMAQD) are disordered.

The protein resides in the nucleus. Transcription factor; part of the gene cluster that mediates the biosynthesis of the 6-methyl-2-pyrone derivative xylariolide D. May play a role in the regulation of the expression of the highly reducing polyketide synthase xilA and the cytochroe P450 monooxygenase xilC. In Penicillium rubens (strain ATCC 28089 / DSM 1075 / NRRL 1951 / Wisconsin 54-1255) (Penicillium chrysogenum), this protein is Transcription factor xilB.